The following is a 315-amino-acid chain: 4-hydroxy-3-methylbut-2-enyl diphosphate reductase (315 aa).

Cysteine 12 is a binding site for [4Fe-4S] cluster. (2E)-4-hydroxy-3-methylbut-2-enyl diphosphate contacts are provided by histidine 41 and histidine 74. Dimethylallyl diphosphate-binding residues include histidine 41 and histidine 74. Histidine 41 and histidine 74 together coordinate isopentenyl diphosphate. Cysteine 96 is a [4Fe-4S] cluster binding site. (2E)-4-hydroxy-3-methylbut-2-enyl diphosphate is bound at residue histidine 124. Histidine 124 provides a ligand contact to dimethylallyl diphosphate. Histidine 124 serves as a coordination point for isopentenyl diphosphate. The Proton donor role is filled by glutamate 126. (2E)-4-hydroxy-3-methylbut-2-enyl diphosphate is bound at residue threonine 168. Cysteine 198 contacts [4Fe-4S] cluster. The (2E)-4-hydroxy-3-methylbut-2-enyl diphosphate site is built by serine 226, serine 227, asparagine 228, and serine 270. Serine 226, serine 227, asparagine 228, and serine 270 together coordinate dimethylallyl diphosphate. Isopentenyl diphosphate is bound by residues serine 226, serine 227, asparagine 228, and serine 270.

The protein belongs to the IspH family. It depends on [4Fe-4S] cluster as a cofactor.

The catalysed reaction is isopentenyl diphosphate + 2 oxidized [2Fe-2S]-[ferredoxin] + H2O = (2E)-4-hydroxy-3-methylbut-2-enyl diphosphate + 2 reduced [2Fe-2S]-[ferredoxin] + 2 H(+). It carries out the reaction dimethylallyl diphosphate + 2 oxidized [2Fe-2S]-[ferredoxin] + H2O = (2E)-4-hydroxy-3-methylbut-2-enyl diphosphate + 2 reduced [2Fe-2S]-[ferredoxin] + 2 H(+). It functions in the pathway isoprenoid biosynthesis; dimethylallyl diphosphate biosynthesis; dimethylallyl diphosphate from (2E)-4-hydroxy-3-methylbutenyl diphosphate: step 1/1. The protein operates within isoprenoid biosynthesis; isopentenyl diphosphate biosynthesis via DXP pathway; isopentenyl diphosphate from 1-deoxy-D-xylulose 5-phosphate: step 6/6. In terms of biological role, catalyzes the conversion of 1-hydroxy-2-methyl-2-(E)-butenyl 4-diphosphate (HMBPP) into a mixture of isopentenyl diphosphate (IPP) and dimethylallyl diphosphate (DMAPP). Acts in the terminal step of the DOXP/MEP pathway for isoprenoid precursor biosynthesis. This is 4-hydroxy-3-methylbut-2-enyl diphosphate reductase from Pseudomonas syringae pv. tomato (strain ATCC BAA-871 / DC3000).